The following is a 457-amino-acid chain: Oxysterol-binding protein-related protein 3C (457 aa).

2 disordered regions span residues 37-61 (NEGVEVINPEGGKEDAEEEAQKGRW) and 363-393 (QGDLSKAGSEKHSLEERQRAEKRTRETKGQK). 2 stretches are compositionally biased toward basic and acidic residues: residues 47-61 (GGKEDAEEEAQKGRW) and 370-391 (GSEKHSLEERQRAEKRTRETKG).

Belongs to the OSBP family. In terms of tissue distribution, expressed in roots, leaves, stems and flowers.

Its function is as follows. May be involved in the transport of sterols. This is Oxysterol-binding protein-related protein 3C (ORP3C) from Arabidopsis thaliana (Mouse-ear cress).